The sequence spans 301 residues: MGDQVQFARMNGLGNKILVVDMRGRKDRVTPQAAIALNADPATEFDQIMAIHDPKSAGTDAWIDIVNSDGSMAQACGNGTRCVVQALAAETGRKAFLFHTVAGLLEAKEHDNGTISVDMGKPRFGWDQIPLAEEFHDTRRIELQIGPIDAPVLHSPSVASMGNPHAIFWVENDVWSYELDRFGPLLENHPIFPERANISIARIRSRQEMDLRTWERGAGLTLACGSAACAAAVNGARTGRTERMVTVNVPGGPLKIEWRERDDHVIMTGPAEWEWSGTVDPVTGIFARNEPESGDNGARAL.

Substrate is bound by residues N15, Q47, and N67. The active-site Proton donor is C76. Substrate-binding positions include 77–78 (GN), N163, N197, and 215–216 (ER). Residue C224 is the Proton acceptor of the active site. Position 225 to 226 (225 to 226 (GS)) interacts with substrate.

The protein belongs to the diaminopimelate epimerase family. Homodimer.

It localises to the cytoplasm. It carries out the reaction (2S,6S)-2,6-diaminopimelate = meso-2,6-diaminopimelate. It participates in amino-acid biosynthesis; L-lysine biosynthesis via DAP pathway; DL-2,6-diaminopimelate from LL-2,6-diaminopimelate: step 1/1. Its function is as follows. Catalyzes the stereoinversion of LL-2,6-diaminopimelate (L,L-DAP) to meso-diaminopimelate (meso-DAP), a precursor of L-lysine and an essential component of the bacterial peptidoglycan. This chain is Diaminopimelate epimerase, found in Rhizobium meliloti (strain 1021) (Ensifer meliloti).